The chain runs to 599 residues: NADH-quinone oxidoreductase subunit C/D (599 aa).

Positions 1–189 (MTDLTTHDLA…DPFELTKQKE (189 aa)) are NADH dehydrogenase I subunit C. The segment at 213–599 (DFMFLNLGPN…IDFVMSDVDR (387 aa)) is NADH dehydrogenase I subunit D.

It in the N-terminal section; belongs to the complex I 30 kDa subunit family. In the C-terminal section; belongs to the complex I 49 kDa subunit family. As to quaternary structure, NDH-1 is composed of 13 different subunits. Subunits NuoB, CD, E, F, and G constitute the peripheral sector of the complex.

The protein localises to the cell inner membrane. The catalysed reaction is a quinone + NADH + 5 H(+)(in) = a quinol + NAD(+) + 4 H(+)(out). Functionally, NDH-1 shuttles electrons from NADH, via FMN and iron-sulfur (Fe-S) centers, to quinones in the respiratory chain. The immediate electron acceptor for the enzyme in this species is believed to be ubiquinone. Couples the redox reaction to proton translocation (for every two electrons transferred, four hydrogen ions are translocated across the cytoplasmic membrane), and thus conserves the redox energy in a proton gradient. The chain is NADH-quinone oxidoreductase subunit C/D from Pectobacterium atrosepticum (strain SCRI 1043 / ATCC BAA-672) (Erwinia carotovora subsp. atroseptica).